We begin with the raw amino-acid sequence, 449 residues long: Exodeoxyribonuclease 7 large subunit (449 aa).

Belongs to the XseA family. In terms of assembly, heterooligomer composed of large and small subunits.

It is found in the cytoplasm. The catalysed reaction is Exonucleolytic cleavage in either 5'- to 3'- or 3'- to 5'-direction to yield nucleoside 5'-phosphates.. In terms of biological role, bidirectionally degrades single-stranded DNA into large acid-insoluble oligonucleotides, which are then degraded further into small acid-soluble oligonucleotides. This chain is Exodeoxyribonuclease 7 large subunit, found in Salmonella paratyphi B (strain ATCC BAA-1250 / SPB7).